A 409-amino-acid chain; its full sequence is MDVCEESETFLENTENQKIEATEETAPTLHCPDEKSERSHVCCLLGVSDLTLEEDGRASECAISTGWEEAVHGWGRTSPTACIWSKKKVKRGRAREGTNGGNDCLFCMSLSQGSLEPRSLLEVGKLEAGAEAEVSTQKSWSSEKNWSGLSQGPGTASREQSNKLCIPTDVHGEKKSLQLKEFIWCMEEWPMPETVSSKAGRNPSGSPEQGLSTPDSLAAKALVVLPPLKSSPHNLDVLSKKSRNIFWQPEEKVLRVEKDDCMACADGLKGVDGKGEKRHFELASHVKVTNVLPFPPTAAQTHLLSAESQRCCLHWSLLPQKSTVFPPNPSDIHYLATLQVLGQQGKQSCRTRLKTKDTKPPRTTAKHIITEAKQQNRPHVLESKVFPKPLLPSLTVSRVVIPVSTHRVL.

Disordered stretches follow at residues 12–32 (ENTENQKIEATEETAPTLHCP), 133–160 (EVSTQKSWSSEKNWSGLSQGPGTASREQ), and 194–213 (TVSSKAGRNPSGSPEQGLST). The segment covering 134 to 160 (VSTQKSWSSEKNWSGLSQGPGTASREQ) has biased composition (polar residues).

This is an uncharacterized protein from Mus musculus (Mouse).